A 398-amino-acid polypeptide reads, in one-letter code: 1-deoxy-D-xylulose 5-phosphate reductoisomerase (398 aa).

7 residues coordinate NADPH: threonine 21, glycine 22, serine 23, isoleucine 24, glycine 47, asparagine 50, and asparagine 127. Lysine 128 provides a ligand contact to 1-deoxy-D-xylulose 5-phosphate. Glutamate 129 provides a ligand contact to NADPH. Aspartate 151 contacts Mn(2+). Serine 152, glutamate 153, serine 177, and histidine 200 together coordinate 1-deoxy-D-xylulose 5-phosphate. Glutamate 153 serves as a coordination point for Mn(2+). Glycine 206 serves as a coordination point for NADPH. 4 residues coordinate 1-deoxy-D-xylulose 5-phosphate: serine 213, asparagine 218, lysine 219, and glutamate 222. Glutamate 222 provides a ligand contact to Mn(2+).

This sequence belongs to the DXR family. Requires Mg(2+) as cofactor. The cofactor is Mn(2+).

It catalyses the reaction 2-C-methyl-D-erythritol 4-phosphate + NADP(+) = 1-deoxy-D-xylulose 5-phosphate + NADPH + H(+). The protein operates within isoprenoid biosynthesis; isopentenyl diphosphate biosynthesis via DXP pathway; isopentenyl diphosphate from 1-deoxy-D-xylulose 5-phosphate: step 1/6. Functionally, catalyzes the NADPH-dependent rearrangement and reduction of 1-deoxy-D-xylulose-5-phosphate (DXP) to 2-C-methyl-D-erythritol 4-phosphate (MEP). This is 1-deoxy-D-xylulose 5-phosphate reductoisomerase from Mycolicibacterium smegmatis (strain ATCC 700084 / mc(2)155) (Mycobacterium smegmatis).